The sequence spans 204 residues: Large ribosomal subunit protein eL15 (204 aa).

The segment at 161 to 180 (MRGLTSAGKKSRGLGKGHKF) is disordered. Over residues 169-180 (KKSRGLGKGHKF) the composition is skewed to basic residues.

It belongs to the eukaryotic ribosomal protein eL15 family. As to quaternary structure, component of the large ribosomal subunit.

Its subcellular location is the cytoplasm. Functionally, component of the large ribosomal subunit. The ribosome is a large ribonucleoprotein complex responsible for the synthesis of proteins in the cell. This chain is Large ribosomal subunit protein eL15 (rpl15), found in Ictalurus punctatus (Channel catfish).